A 1457-amino-acid polypeptide reads, in one-letter code: NBPF family member NBPF12 (1457 aa).

The stretch at 75–119 (RQFKEEKLAEQLKQAEELRQYKVLVHSQERELTQLREKLREGRDA) forms a coiled coil. The disordered stretch occupies residues 162–200 (LSPENDEDEDEDVQVEEDEKVLESSAPREVQKAEESKVP). The segment covering 165–181 (ENDEDEDEDVQVEEDEK) has biased composition (acidic residues). One can recognise an Olduvai 1 domain in the interval 165 to 259 (ENDEDEDEDV…ECQDALNILP (95 aa)). Residues 190 to 200 (EVQKAEESKVP) are compositionally biased toward basic and acidic residues. Positions 339–390 (KSMLRNELQFKEEKLAEQLKQAEELRQYKVLVHSQERELTQLREKLREGRDA) form a coiled coil. The disordered stretch occupies residues 432 to 472 (KLSPENDEDEDEDVQVEEDEKVLESSSPREMQKAEESKVPE). The segment covering 436–452 (ENDEDEDEDVQVEEDEK) has biased composition (acidic residues). The region spanning 436-530 (ENDEDEDEDV…ECQDALNILP (95 aa)) is the Olduvai 2 domain. A compositionally biased stretch (basic and acidic residues) spans 461–472 (EMQKAEESKVPE). Residues 610-661 (KSMLRNELQFKEEKLAEQLKQAEELRQYKVLVHSQERELTQLREKLREGRDA) are a coiled coil. 9 consecutive Olduvai domains span residues 707–799 (ENDN…HIIP), 800–871 (ENES…VDIG), 872–963 (RHRW…PSCP), 966–1021 (SREL…LDVD), 1022–1114 (RIKK…RSKK), 1115–1207 (KRRR…PSCP), 1210–1265 (SREL…LDVD), 1266–1358 (RIKK…RSKK), and 1359–1457 (KRRR…IFPQ). Disordered stretches follow at residues 721–746 (AEKV…EDSL) and 791–838 (WEDA…GYST). Acidic residues-rich tracts occupy residues 801–810 (NESDDEEEEE) and 821–833 (ESEE…ESWD). A disordered region spans residues 1100–1139 (KKGKGKKRRGRRSKKKRRRGRKEGEEDQNPPCPRLSRELL). The span at 1102 to 1120 (GKGKKRRGRRSKKKRRRGR) shows a compositional bias: basic residues. The tract at residues 1344–1378 (KKGKGKKRRGRRSKKKRRRGRKEGEEDQNPPCPRL) is disordered. Residues 1346–1364 (GKGKKRRGRRSKKKRRRGR) are compositionally biased toward basic residues.

The protein belongs to the NBPF family. In terms of tissue distribution, widely expressed with highest levels in brain, ovary, mammary gland, skin and adipose tissue. Also expressed in testis. Detected in a number of tumors including osteosarcoma, mammary carcinoma and hepatocellular carcinoma.

It localises to the cytoplasm. In Homo sapiens (Human), this protein is NBPF family member NBPF12.